The chain runs to 166 residues: Small ribosomal subunit protein uS5 (166 aa).

In terms of domain architecture, S5 DRBM spans 11 to 74 (LIEKLVSVKR…ENAKKNMVSV (64 aa)).

The protein belongs to the universal ribosomal protein uS5 family. Part of the 30S ribosomal subunit. Contacts proteins S4 and S8.

In terms of biological role, with S4 and S12 plays an important role in translational accuracy. Its function is as follows. Located at the back of the 30S subunit body where it stabilizes the conformation of the head with respect to the body. The protein is Small ribosomal subunit protein uS5 of Francisella tularensis subsp. holarctica (strain LVS).